Reading from the N-terminus, the 254-residue chain is 3-deoxy-manno-octulosonate cytidylyltransferase (254 aa).

This sequence belongs to the KdsB family.

It is found in the cytoplasm. It carries out the reaction 3-deoxy-alpha-D-manno-oct-2-ulosonate + CTP = CMP-3-deoxy-beta-D-manno-octulosonate + diphosphate. It functions in the pathway nucleotide-sugar biosynthesis; CMP-3-deoxy-D-manno-octulosonate biosynthesis; CMP-3-deoxy-D-manno-octulosonate from 3-deoxy-D-manno-octulosonate and CTP: step 1/1. Its pathway is bacterial outer membrane biogenesis; lipopolysaccharide biosynthesis. Functionally, activates KDO (a required 8-carbon sugar) for incorporation into bacterial lipopolysaccharide in Gram-negative bacteria. This Chlamydia trachomatis serovar L2 (strain ATCC VR-902B / DSM 19102 / 434/Bu) protein is 3-deoxy-manno-octulosonate cytidylyltransferase.